The chain runs to 357 residues: Chorismate synthase (357 aa).

A compositionally biased stretch (basic and acidic residues) spans 38 to 49; that stretch reads EKDIQPDLDRRK. Residues 38–60 form a disordered region; it reads EKDIQPDLDRRKPGTSRYTTPRR. NADP(+)-binding residues include Arg-48 and Arg-54. FMN contacts are provided by residues 125 to 127, 243 to 244, Gly-283, 298 to 302, and Arg-324; these read RSS, NA, and KPTSS.

This sequence belongs to the chorismate synthase family. Homotetramer. It depends on FMNH2 as a cofactor.

It carries out the reaction 5-O-(1-carboxyvinyl)-3-phosphoshikimate = chorismate + phosphate. It functions in the pathway metabolic intermediate biosynthesis; chorismate biosynthesis; chorismate from D-erythrose 4-phosphate and phosphoenolpyruvate: step 7/7. Catalyzes the anti-1,4-elimination of the C-3 phosphate and the C-6 proR hydrogen from 5-enolpyruvylshikimate-3-phosphate (EPSP) to yield chorismate, which is the branch point compound that serves as the starting substrate for the three terminal pathways of aromatic amino acid biosynthesis. This reaction introduces a second double bond into the aromatic ring system. The sequence is that of Chorismate synthase from Haemophilus influenzae (strain PittEE).